Consider the following 379-residue polypeptide: Glutamate 5-kinase (379 aa).

Lys19 provides a ligand contact to ATP. Positions 59, 146, and 158 each coordinate substrate. 178–179 (TD) provides a ligand contact to ATP. Positions 285–363 (RGAVTVDAGA…SEFERLLGYV (79 aa)) constitute a PUA domain.

The protein belongs to the glutamate 5-kinase family.

It is found in the cytoplasm. It catalyses the reaction L-glutamate + ATP = L-glutamyl 5-phosphate + ADP. The protein operates within amino-acid biosynthesis; L-proline biosynthesis; L-glutamate 5-semialdehyde from L-glutamate: step 1/2. Catalyzes the transfer of a phosphate group to glutamate to form L-glutamate 5-phosphate. The sequence is that of Glutamate 5-kinase from Variovorax paradoxus (strain S110).